Reading from the N-terminus, the 100-residue chain is Histone H3-like 2 (100 aa).

The segment at 1–46 is disordered; it reads MARMKHTARMSTGGKAPRKQLASKALRKAPPPPTKGVKQPTTTTSG.

Belongs to the histone H3 family. The nucleosome is a histone octamer containing two molecules each of H2A, H2B, H3 and H4 assembled in one H3-H4 heterotetramer and two H2A-H2B heterodimers. The octamer wraps approximately 147 bp of DNA. As to expression, pollen specific.

The protein resides in the nucleus. It is found in the chromosome. Its function is as follows. Core component of nucleosome. Nucleosomes wrap and compact DNA into chromatin, limiting DNA accessibility to the cellular machineries which require DNA as a template. Histones thereby play a central role in transcription regulation, DNA repair, DNA replication and chromosomal stability. DNA accessibility is regulated via a complex set of post-translational modifications of histones, also called histone code, and nucleosome remodeling. This chain is Histone H3-like 2 (gcH3), found in Lilium longiflorum (Trumpet lily).